Consider the following 495-residue polypeptide: UDP-N-acetylmuramoyl-L-alanyl-D-glutamate--2,6-diaminopimelate ligase (495 aa).

Residues L27, S29, and 44–46 each bind UDP-N-acetyl-alpha-D-muramoyl-L-alanyl-D-glutamate; that span reads HQT. 116–122 lines the ATP pocket; it reads GTNGKTT. Residues N157, 158–159, S185, Q191, and R193 each bind UDP-N-acetyl-alpha-D-muramoyl-L-alanyl-D-glutamate; that span reads TT. Residue K225 is modified to N6-carboxylysine. Meso-2,6-diaminopimelate is bound by residues R390, 414 to 417, G465, and E469; that span reads DNPR. The Meso-diaminopimelate recognition motif signature appears at 414 to 417; sequence DNPR.

This sequence belongs to the MurCDEF family. MurE subfamily. Requires Mg(2+) as cofactor. Post-translationally, carboxylation is probably crucial for Mg(2+) binding and, consequently, for the gamma-phosphate positioning of ATP.

Its subcellular location is the cytoplasm. It catalyses the reaction UDP-N-acetyl-alpha-D-muramoyl-L-alanyl-D-glutamate + meso-2,6-diaminopimelate + ATP = UDP-N-acetyl-alpha-D-muramoyl-L-alanyl-gamma-D-glutamyl-meso-2,6-diaminopimelate + ADP + phosphate + H(+). It functions in the pathway cell wall biogenesis; peptidoglycan biosynthesis. Functionally, catalyzes the addition of meso-diaminopimelic acid to the nucleotide precursor UDP-N-acetylmuramoyl-L-alanyl-D-glutamate (UMAG) in the biosynthesis of bacterial cell-wall peptidoglycan. The chain is UDP-N-acetylmuramoyl-L-alanyl-D-glutamate--2,6-diaminopimelate ligase from Sodalis glossinidius (strain morsitans).